The sequence spans 282 residues: uncharacterized protein (282 aa).

The protein to M.tuberculosis Rv2161c and Rv3079c.

This is an uncharacterized protein from Mycobacterium tuberculosis (strain CDC 1551 / Oshkosh).